The following is a 549-amino-acid chain: Cation/acetate symporter ActP (549 aa).

Helical transmembrane passes span 33 to 53, 77 to 97, 103 to 123, 148 to 168, 183 to 203, 206 to 226, 262 to 282, 303 to 323, 355 to 375, 404 to 424, 428 to 448, 464 to 484, and 493 to 513; these read WQAI…TYWA, LAIA…ALVF, GLIY…LIAE, ILSA…QMVG, IAVV…GMLA, WVQI…AFMV, ISAL…PHIL, GFMG…IMLV, LFLG…VAGL, VSKI…VLFE, IAFM…PIIL, GGWL…TIWV, and IFPY…GIWF.

This sequence belongs to the sodium:solute symporter (SSF) (TC 2.A.21) family.

The protein resides in the cell inner membrane. Transports acetate. The chain is Cation/acetate symporter ActP from Escherichia fergusonii (strain ATCC 35469 / DSM 13698 / CCUG 18766 / IAM 14443 / JCM 21226 / LMG 7866 / NBRC 102419 / NCTC 12128 / CDC 0568-73).